The chain runs to 173 residues: uncharacterized protein (173 aa).

A run of 4 helical transmembrane segments spans residues 13–35, 50–72, 107–129, and 139–161; these read LQVI…PLLS, IIFI…FLGL, NYLI…KYLL, and GYLI…RLIL.

The protein localises to the cell membrane. This is an uncharacterized protein from Rickettsia prowazekii (strain Madrid E).